Here is a 316-residue protein sequence, read N- to C-terminus: L-lactate dehydrogenase (316 aa).

Residues Val-15, Asp-36, Arg-41, Tyr-66, and 80 to 81 (GA) each bind NAD(+). Residues Gln-83, Arg-90, and 122 to 125 (NPVD) contribute to the substrate site. Residues 120–122 (ATN) and Thr-145 contribute to the NAD(+) site. 150 to 153 (DTAR) serves as a coordination point for substrate. Residues Arg-155 and His-170 each coordinate beta-D-fructose 1,6-bisphosphate. The active-site Proton acceptor is the His-177. Tyr-222 carries the phosphotyrosine modification. Thr-231 serves as a coordination point for substrate. The interval 287 to 316 (DPGLSDEEREALRDSARALRDSRADLTVGT) is disordered. A compositionally biased stretch (basic and acidic residues) spans 296-310 (EALRDSARALRDSRA).

The protein belongs to the LDH/MDH superfamily. LDH family. As to quaternary structure, homotetramer.

It is found in the cytoplasm. The catalysed reaction is (S)-lactate + NAD(+) = pyruvate + NADH + H(+). It functions in the pathway fermentation; pyruvate fermentation to lactate; (S)-lactate from pyruvate: step 1/1. Allosterically activated by fructose 1,6-bisphosphate (FBP). Its function is as follows. Catalyzes the conversion of lactate to pyruvate. The sequence is that of L-lactate dehydrogenase from Salinibacter ruber (strain DSM 13855 / M31).